Here is a 999-residue protein sequence, read N- to C-terminus: Sarcoplasmic/endoplasmic reticulum calcium ATPase 3 (999 aa).

Position 1 is an N-acetylmethionine (Met-1). At 1–48 (MEEAHLLPAADVLRRFSVTAEGGLSPAQVTRARERYGPNELPTEEGKS) the chain is on the cytoplasmic side. Ser-17 carries the phosphoserine modification. Thr-19 is subject to Phosphothreonine. Position 25 is a phosphoserine (Ser-25). The chain crosses the membrane as a helical span at residues 49 to 69 (LWELVLEQFEDLLVRILLLAA). Residues 70–89 (LVSFVLACFEEGEETTTAFV) lie on the Extracellular side of the membrane. Residues 90–110 (EPLVIVLILVANAVVGVWQER) traverse the membrane as a helical segment. Residues 111–253 (NAENAIEALK…PERTPLQQKL (143 aa)) lie on the Cytoplasmic side of the membrane. Residues 254-273 (DEFGRQLSRAISVICMAVWV) traverse the membrane as a helical segment. The Extracellular segment spans residues 274-295 (INIGHFADPAHGGSWLRGAVYY). Residues 296 to 313 (FKIAVALAVAAIPEGLPA) form a helical membrane-spanning segment. The Ca(2+) site is built by Val-304, Ala-305, Ile-307, and Glu-309. Over 314-757 (VITTCLALGT…EEGRAIYSNM (444 aa)) the chain is Cytoplasmic. Asp-351 (4-aspartylphosphate intermediate) is an active-site residue. The Mg(2+) site is built by Asp-351 and Thr-353. Thr-353 is an ATP binding site. Positions 370-400 (AEAEAGTCRLHEFTISGTTYAPEGEVRQGEQ) are interaction with phospholamban 1. Thr-415 is modified (phosphothreonine). ATP is bound by residues Glu-442, Arg-489, Lys-515, Arg-560, Thr-625, Gly-626, and Asp-627. At Ser-662 the chain carries Phosphoserine. ATP is bound by residues Arg-678 and Lys-684. Asp-703 lines the Mg(2+) pocket. Asn-706 is an ATP binding site. The helical transmembrane segment at 758 to 777 (KQFIRYLISSNVGEVVCIFL) threads the bilayer. 2 residues coordinate Ca(2+): Asn-768 and Glu-771. Residues 778–787 (TAILGLPEAL) are Extracellular-facing. A helical transmembrane segment spans residues 788–808 (IPVQLLWVNLVTDGLPATALG). An interaction with phospholamban 2 region spans residues 788 to 808 (IPVQLLWVNLVTDGLPATALG). Asn-796, Thr-799, and Asp-800 together coordinate Ca(2+). Topologically, residues 809 to 828 (FNPPDLDIMEKRPRNPREAL) are cytoplasmic. The chain crosses the membrane as a helical span at residues 829-851 (ISGWLFFRYLAIGVYVGLATVAA). Residues 852-897 (ATWWFLYDAEGPQVTFYQLRNFLKCSEDNPLFTGTDCEVFESRFPT) lie on the Extracellular side of the membrane. A disulfide bridge links Cys-876 with Cys-888. The helical transmembrane segment at 898–917 (TMALSVLVTTEMCNALNSVS) threads the bilayer. Residue Glu-908 participates in Ca(2+) binding. At 918 to 930 (ENQSLLRMPPWLN) the chain is on the cytoplasmic side. Residues 931–949 (PWLLAAVAMSMALHFLILL) form a helical membrane-spanning segment. Over 950 to 964 (VPPLPLIFQVTPLSG) the chain is Extracellular. Residues 965 to 985 (RQWVVVLQISLPVILLDEALK) form a helical membrane-spanning segment. Over 986–999 (YLSRKHVDEEKGRQ) the chain is Cytoplasmic.

This sequence belongs to the cation transport ATPase (P-type) (TC 3.A.3) family. Type IIA subfamily. As to quaternary structure, interacts with sarcolipin (SLN). Interacts with phospholamban (PLN). Interacts with myoregulin (MRLN). Interacts with DWORF. Interacts with VMP1. Interacts with TUNAR; the interaction occurs at low levels in low glucose conditions and is increased by high glucose levels. Mg(2+) is required as a cofactor. As to expression, expressed in endothelial tissues.

The protein localises to the endoplasmic reticulum membrane. The protein resides in the sarcoplasmic reticulum membrane. It carries out the reaction Ca(2+)(in) + ATP + H2O = Ca(2+)(out) + ADP + phosphate + H(+). Its activity is regulated as follows. Inhibited by sarcolipin (SLN), phospholamban (PLN) and myoregulin (MRLN). Enhanced by DWORF; DWORF increases activity by displacing sarcolipin (SLN), phospholamban (PLN) and myoregulin (MRLN). Its function is as follows. This magnesium-dependent enzyme catalyzes the hydrolysis of ATP coupled with the transport of calcium. Transports calcium ions from the cytosol into the sarcoplasmic/endoplasmic reticulum lumen. Contributes to calcium sequestration involved in muscular excitation/contraction. This Sus scrofa (Pig) protein is Sarcoplasmic/endoplasmic reticulum calcium ATPase 3 (ATP2A3).